The sequence spans 204 residues: phospholipase A2 inhibitor and Ly6/PLAUR domain-containing protein (204 aa).

An N-terminal signal peptide occupies residues 1–26 (MRLSRRPETFLLAFVLLCTLLGLGCP). The 91-residue stretch at 27 to 117 (LHCEICTAAG…NSAFLSVPLT (91 aa)) folds into the UPAR/Ly6 domain. Disulfide bonds link C29-C53, C32-C39, C46-C74, C80-C101, C102-C107, C126-C151, and C144-C172.

Belongs to the CNF-like-inhibitor family.

The protein localises to the secreted. In Homo sapiens (Human), this protein is phospholipase A2 inhibitor and Ly6/PLAUR domain-containing protein (PINLYP).